The primary structure comprises 258 residues: Na(+)-translocating NADH-quinone reductase subunit C (258 aa).

The chain crosses the membrane as a helical span at residues leucine 14–glycine 34. An FMN phosphoryl serine modification is found at serine 226.

The protein belongs to the NqrC family. In terms of assembly, composed of six subunits; NqrA, NqrB, NqrC, NqrD, NqrE and NqrF. It depends on FMN as a cofactor.

Its subcellular location is the cell inner membrane. It catalyses the reaction a ubiquinone + n Na(+)(in) + NADH + H(+) = a ubiquinol + n Na(+)(out) + NAD(+). Its function is as follows. NQR complex catalyzes the reduction of ubiquinone-1 to ubiquinol by two successive reactions, coupled with the transport of Na(+) ions from the cytoplasm to the periplasm. NqrA to NqrE are probably involved in the second step, the conversion of ubisemiquinone to ubiquinol. The sequence is that of Na(+)-translocating NADH-quinone reductase subunit C from Neisseria meningitidis serogroup B (strain ATCC BAA-335 / MC58).